Here is a 2690-residue protein sequence, read N- to C-terminus: Non-reducing polyketide synthase pigA (2690 aa).

Residues Asn-96 to Phe-211 form the Starter acyltransferase (SAT) domain. Cys-140 serves as the catalytic Nucleophile; for transacylase activity. The Proton donor/acceptor; for transacylase activity role is filled by His-258. One can recognise a Ketosynthase family 3 (KS3) domain in the interval Glu-388 to Gln-804. Residues Cys-553, His-688, and His-727 each act as for beta-ketoacyl synthase activity in the active site. Residues Phe-915–Ser-1182 enclose the Malonyl-CoA:ACP transacylase (MAT) domain. Residues Leu-1296 to Asp-1426 are N-terminal hotdog fold. The PKS/mFAS DH domain maps to Leu-1296–Ser-1602. A product template (PT) domain region spans residues Leu-1323 to Ser-1600. The active-site Proton acceptor; for dehydratase activity is the His-1327. Residues Ala-1454–Ser-1602 form a C-terminal hotdog fold region. Asp-1510 acts as the Proton donor; for dehydratase activity in catalysis. The Carrier 1 domain occupies Pro-1657–Leu-1731. Ser-1691 is subject to O-(pantetheine 4'-phosphoryl)serine. A disordered region spans residues Leu-1731–Ala-1764. Residues Gly-1736–Ser-1751 are compositionally biased toward acidic residues. A compositionally biased stretch (polar residues) spans Pro-1755–Ala-1764. In terms of domain architecture, Carrier 2 spans Ser-1768–Ser-1842. Ser-1802 is modified (O-(pantetheine 4'-phosphoryl)serine). The methyltransferase domain stretch occupies residues Gln-1948–Ala-2255. The region spanning Val-2320 to Ala-2564 is the Thioester reductase (TE) domain.

Requires pantetheine 4'-phosphate as cofactor.

It participates in secondary metabolite biosynthesis. Functionally, non-reducing polyketide synthase; part of the gene cluster that mediates the biosynthesis of azaphilone pigments (MonAzPs), a complex mixture of compounds with a common azaphilone skeleton very widely used as food colorants. PigA catalyzes the first step of MonAzPs biosynthesis and forms the hexaketide precursor from successive condensations of five malonyl-CoA units, with a simple acetyl-CoA starter unit. The starter acyl transferase (SAT) domain of pigA selects an acetyl-CoA starter unit, and the ketoacyl synthase (KS)-acyl transferase (AT)-acyl carrier protein (ACP) domains extend this starter unit five times with malonyl-CoA in five successive decarboxylative Claisen condensation cycles. The methyltransferase (MT) domain conducts a single C-methylation at C-4, most likely at the pentaketide stage. The reactive hexaketide chain then undergoes a product template (PT) domain-mediated C-2 to C-7 aldol cyclization to afford the first aromatic ring, followed by reductive release of the first pathway intermediate by the NADPH-dependent reductive release (R) domain. The role of esterase pigG is not clear, but it may play at most a supplementary role in the formation of the benzaldehyde produced by the pigA nrPKS. This very reactive benzaldehyde is intercepted by the pigC ketoreductase that to provide the first stable enzyme-free MonAzPs intermediate, 6-(4-hydroxy-2-oxopentyl)-3-methyl-2,4-dioxocyclohexane carbaldehyde, also known as M7PKS-1. The FAD-dependent monooxygenase pigN hydroxylates M7PKS-1 at C-4, which triggers the formation of the pyran ring. PigJ, pigK and pigD are involved in the acetylation of the pyran ring. PigJ and pigK form the two subunits of a dedicated fungal FAS that produces the side chain fatty acyl moiety of MonAzPs and pigD transfers the fatty acyl chain to the C-4 alcohol. PigM and pigO are involved in the elimination of the omega-1 alcohol. PigM acts as an O-acetyltransferase that synthesizes the putative O-11 acetyl intermediate whereas pigO eliminates acetic acid to yield an intermediate with a C10(11) double bond. The dehydration of the C-11 alcohol followed by the reduction of the C6(7) double bond by the NAD(P)H-dependent oxidoreductase pigE increases the electrophilicity of the C-5 ketone of the resulting acyl benzopyran. This in turn sets up the C-5 ketone for an intramolecular Knoevenagel aldol condensation with the C-20 enol of the side chain. This condensation affords the characteristic linear tricyclic carbon skeletons of the yellow pigments that serve as the common precursors for the classical yellow pigments monascin and ankaflavin, orange pigments rubopunctatin and monascorubrin, and red pigments ribropunctamine and monascorubramine. The FAD-dependent oxidoreductase pigF is especially invoved in the biosynthesis of orange and red pigments via desaturation of C6(7). The chain is Non-reducing polyketide synthase pigA from Monascus ruber (Mold).